An 87-amino-acid chain; its full sequence is Beta-toxin Ct1a (87 aa).

The N-terminal stretch at 1 to 19 (MNSLLMITACLALIGTVWA) is a signal peptide. Positions 20-85 (KEGYLVNHST…VWPLPKKTCN (66 aa)) constitute an LCN-type CS-alpha/beta domain. Disulfide bonds link C31–C84, C35–C60, C44–C65, and C48–C67. At N85 the chain carries Asparagine amide.

The protein belongs to the long (4 C-C) scorpion toxin superfamily. Sodium channel inhibitor family. Beta subfamily. Expressed by the venom gland.

Its subcellular location is the secreted. Its function is as follows. Beta toxins bind voltage-independently at site-4 of sodium channels (Nav) and shift the voltage of activation toward more negative potentials thereby affecting sodium channel activation and promoting spontaneous and repetitive firing. Is lethal to mice but does not show toxicity to freshwater shrimp and crickets. This is Beta-toxin Ct1a from Centruroides tecomanus (Scorpion).